A 233-amino-acid chain; its full sequence is Orotidine 5'-phosphate decarboxylase (233 aa).

Substrate is bound by residues Asp-13, Lys-35, 62–71 (DLKFHDIPNT), Thr-122, Arg-182, Gln-191, Gly-211, and Arg-212. The Proton donor role is filled by Lys-64.

It belongs to the OMP decarboxylase family. Type 1 subfamily. In terms of assembly, homodimer.

The enzyme catalyses orotidine 5'-phosphate + H(+) = UMP + CO2. The protein operates within pyrimidine metabolism; UMP biosynthesis via de novo pathway; UMP from orotate: step 2/2. Its function is as follows. Catalyzes the decarboxylation of orotidine 5'-monophosphate (OMP) to uridine 5'-monophosphate (UMP). The polypeptide is Orotidine 5'-phosphate decarboxylase (Pseudomonas putida (strain ATCC 700007 / DSM 6899 / JCM 31910 / BCRC 17059 / LMG 24140 / F1)).